The sequence spans 902 residues: AAA+ ATPase ClpV1 (902 aa).

The 142-residue stretch at 10 to 151 (FGKLNSLAYK…KVEALTERFD (142 aa)) folds into the Clp R domain. 2 repeat regions span residues 13–78 (LNSL…LDRL) and 88–151 (LSSH…ERFD). Residue 237-244 (GEAGVGKT) participates in ATP binding. Residues 441-559 (AEVDDSRRRI…AQLSALQGEE (119 aa)) are a coiled coil. 640-647 (GTSGVGKT) is an ATP binding site.

It belongs to the ClpA/ClpB family. Interacts with TagJ.

Its subcellular location is the cytoplasm. Its function is as follows. Component of the H1 type VI (H1-T6SS) secretion system that plays a role in the release of toxins targeting both eukaryotic and prokaryotic species. Acts as an AAA(+) ATPase that disassembles the contracted sheath, which resets the systems for reassembly of an extended sheath that is ready to fire again. This Pseudomonas aeruginosa (strain ATCC 15692 / DSM 22644 / CIP 104116 / JCM 14847 / LMG 12228 / 1C / PRS 101 / PAO1) protein is AAA+ ATPase ClpV1 (clpV1).